A 388-amino-acid polypeptide reads, in one-letter code: tRNA (guanine(26)-N(2))-dimethyltransferase (388 aa).

The Trm1 methyltransferase domain occupies 7 to 381 (KTVEEGLTKI…APLKKIKEII (375 aa)). Residues Arg-40, Arg-70, Asp-88, Asp-115, and Ala-116 each coordinate S-adenosyl-L-methionine. Positions 248, 251, 268, and 271 each coordinate Zn(2+).

It belongs to the class I-like SAM-binding methyltransferase superfamily. Trm1 family.

It catalyses the reaction guanosine(26) in tRNA + 2 S-adenosyl-L-methionine = N(2)-dimethylguanosine(26) in tRNA + 2 S-adenosyl-L-homocysteine + 2 H(+). Functionally, dimethylates a single guanine residue at position 26 of a number of tRNAs using S-adenosyl-L-methionine as donor of the methyl groups. The polypeptide is tRNA (guanine(26)-N(2))-dimethyltransferase (Methanobrevibacter smithii (strain ATCC 35061 / DSM 861 / OCM 144 / PS)).